Reading from the N-terminus, the 361-residue chain is Phenylalanine 4-monooxygenase, chloroplastic (361 aa).

The N-terminal 55 residues, Met1–Gln55, are a transit peptide targeting the chloroplast. Positions Leu47–Ser67 are disordered. Residues Ala56 to Ser67 show a composition bias toward low complexity. Fe cation is bound by residues His227, His232, and Glu272.

This sequence belongs to the biopterin-dependent aromatic amino acid hydroxylase family. The cofactor is Fe(2+).

The protein resides in the plastid. Its subcellular location is the chloroplast. It carries out the reaction (6R)-L-erythro-5,6,7,8-tetrahydrobiopterin + L-phenylalanine + O2 = (4aS,6R)-4a-hydroxy-L-erythro-5,6,7,8-tetrahydrobiopterin + L-tyrosine. In terms of biological role, catalyzes the hydroxylation of L-phenylalanine to L-tyrosine. Can functionally complement an Escherichia coli tyrosine auxotroph. This is Phenylalanine 4-monooxygenase, chloroplastic from Chlamydomonas reinhardtii (Chlamydomonas smithii).